Consider the following 375-residue polypeptide: L-asparaginase 2 (375 aa).

The N-terminal stretch at 1–19 is a signal peptide; it reads MKKQRMLVLFTALLFVFTG. The tract at residues 22–46 is disordered; sequence HSPETKESPKEKAQTQKVSSASASE. Basic and acidic residues predominate over residues 24–35; it reads PETKESPKEKAQ. One can recognise an Asparaginase/glutaminase domain in the interval 51-375; sequence PNIRILATGG…QKIQAYFNEY (325 aa). The active-site O-isoaspartyl threonine intermediate is the threonine 61. Residues serine 108 and 141 to 142 contribute to the substrate site; that span reads TD.

Belongs to the asparaginase 1 family. Homotetramer.

The catalysed reaction is L-asparagine + H2O = L-aspartate + NH4(+). Functionally, catalyzes the conversion of L-asparagine to L-aspartate and ammonium. The sequence is that of L-asparaginase 2 (ansZ) from Bacillus subtilis (strain 168).